Consider the following 266-residue polypeptide: GTP cyclohydrolase III (266 aa).

Belongs to the archaeal-type GTP cyclohydrolase family.

It carries out the reaction GTP + 3 H2O = 2-amino-5-formylamino-6-(5-phospho-D-ribosylamino)pyrimidin-4(3H)-one + 2 phosphate + 2 H(+). Catalyzes the formation of 2-amino-5-formylamino-6-ribofuranosylamino-4(3H)-pyrimidinone ribonucleotide monophosphate and inorganic phosphate from GTP. Also has an independent pyrophosphate phosphohydrolase activity. This Methanococcus maripaludis (strain DSM 14266 / JCM 13030 / NBRC 101832 / S2 / LL) protein is GTP cyclohydrolase III.